The sequence spans 124 residues: Large ribosomal subunit protein bL12 (124 aa).

This sequence belongs to the bacterial ribosomal protein bL12 family. In terms of assembly, homodimer. Part of the ribosomal stalk of the 50S ribosomal subunit. Forms a multimeric L10(L12)X complex, where L10 forms an elongated spine to which 2 to 4 L12 dimers bind in a sequential fashion. Binds GTP-bound translation factors.

In terms of biological role, forms part of the ribosomal stalk which helps the ribosome interact with GTP-bound translation factors. Is thus essential for accurate translation. The protein is Large ribosomal subunit protein bL12 of Rickettsia akari (strain Hartford).